Here is a 498-residue protein sequence, read N- to C-terminus: 3-octaprenyl-4-hydroxybenzoate carboxy-lyase (498 aa).

N175 lines the Mn(2+) pocket. Prenylated FMN-binding positions include 178 to 180, 192 to 194, and 197 to 198; these read IYR, RWL, and RG. E241 is a Mn(2+) binding site. D290 serves as the catalytic Proton donor.

Belongs to the UbiD family. Homohexamer. The cofactor is prenylated FMN. Requires Mn(2+) as cofactor.

It is found in the cell membrane. It carries out the reaction a 4-hydroxy-3-(all-trans-polyprenyl)benzoate + H(+) = a 2-(all-trans-polyprenyl)phenol + CO2. It functions in the pathway cofactor biosynthesis; ubiquinone biosynthesis. Functionally, catalyzes the decarboxylation of 3-octaprenyl-4-hydroxy benzoate to 2-octaprenylphenol, an intermediate step in ubiquinone biosynthesis. This chain is 3-octaprenyl-4-hydroxybenzoate carboxy-lyase, found in Yersinia pestis bv. Antiqua (strain Antiqua).